The following is a 161-amino-acid chain: Cyclic pyranopterin monophosphate synthase (161 aa).

Substrate contacts are provided by residues 75 to 77 (LCH) and 113 to 114 (ME). The active site involves D128.

It belongs to the MoaC family. Homohexamer; trimer of dimers.

It carries out the reaction (8S)-3',8-cyclo-7,8-dihydroguanosine 5'-triphosphate = cyclic pyranopterin phosphate + diphosphate. Its pathway is cofactor biosynthesis; molybdopterin biosynthesis. Its function is as follows. Catalyzes the conversion of (8S)-3',8-cyclo-7,8-dihydroguanosine 5'-triphosphate to cyclic pyranopterin monophosphate (cPMP). In Enterobacter sp. (strain 638), this protein is Cyclic pyranopterin monophosphate synthase.